A 531-amino-acid chain; its full sequence is GMP synthase [glutamine-hydrolyzing] (531 aa).

The Glutamine amidotransferase type-1 domain maps to 20 to 213 (KILIVDFGSQ…VRKVAGLKGD (194 aa)). Residue cysteine 97 is the Nucleophile of the active site. Residues histidine 187 and glutamate 189 contribute to the active site. One can recognise a GMPS ATP-PPase domain in the interval 214–406 (WTMRAFREEA…LGLPDVFVGR (193 aa)). ATP is bound at residue 241–247 (SGGVDSA).

As to quaternary structure, homodimer.

It catalyses the reaction XMP + L-glutamine + ATP + H2O = GMP + L-glutamate + AMP + diphosphate + 2 H(+). The protein operates within purine metabolism; GMP biosynthesis; GMP from XMP (L-Gln route): step 1/1. Functionally, catalyzes the synthesis of GMP from XMP. This Afipia carboxidovorans (strain ATCC 49405 / DSM 1227 / KCTC 32145 / OM5) (Oligotropha carboxidovorans) protein is GMP synthase [glutamine-hydrolyzing].